We begin with the raw amino-acid sequence, 470 residues long: Poly(A) polymerase catalytic subunit (470 aa).

Active-site residues include D192 and D194.

It belongs to the poxviridae poly(A) polymerase catalytic subunit family. Heterodimer of a large (catalytic) subunit and a small (regulatory) subunit.

It catalyses the reaction RNA(n) + ATP = RNA(n)-3'-adenine ribonucleotide + diphosphate. Polymerase that creates the 3'-poly(A) tail of mRNA's. The sequence is that of Poly(A) polymerase catalytic subunit (PAPL) from Molluscum contagiosum virus subtype 1 (MOCV).